The following is a 663-amino-acid chain: Zinc finger protein 44 (663 aa).

One can recognise a KRAB domain in the interval 52–138 (VAFEDVAVNF…GETLSQIRNS (87 aa)). The C2H2-type 1; atypical zinc-finger motif lies at 189 to 211 (YTHKQCGKGLSYRHSFQTCERPH). Residues 217–239 (YDCKECGKTFSSPGNLRRHMVVK) form a C2H2-type 2; degenerate zinc finger. 15 C2H2-type zinc fingers span residues 245-267 (YKCELCGKAFFWPSLLRMHERTH), 273-295 (YECKQCSKAFPVYSSYLRHEKIH), 301-323 (YECKQCSKAFPDYSSYLRHERTH), 329-351 (YKCKQCGKAFSVSGSLRVHERIH), 357-379 (YTCKQCGKAFCHLGSFQRHMIMH), 385-407 (HKCKICGKGFDFPGSARIHEGTH), 413-435 (YECKQCGKLLSHRSSFRRHMMAH), 441-463 (HKCTVCGKAFDSPSVFQRHERTH), 469-491 (YECKQCGKAFRTSSSLRKHETTH), 497-518 (YKCKCGKAFSDLFSFQSHETTH), 524-546 (YECKECGKAFSSFKYFCRHERTH), 552-574 (YECQICGKAFSRFSYLKTHERTH), 580-602 (YECKQCRKAFFWPSFLLRHERTH), 608-630 (YECKHCGKAFSRSSFCREHERTH), and 636-658 (YECKECGKAFSSLSSFNRHKRTH).

It belongs to the krueppel C2H2-type zinc-finger protein family.

Its subcellular location is the nucleus. Its function is as follows. May be involved in transcriptional regulation. The protein is Zinc finger protein 44 (ZNF44) of Homo sapiens (Human).